The primary structure comprises 171 residues: Transcription antitermination protein NusB (171 aa).

Belongs to the NusB family.

Its function is as follows. Involved in transcription antitermination. Required for transcription of ribosomal RNA (rRNA) genes. Binds specifically to the boxA antiterminator sequence of the ribosomal RNA (rrn) operons. This chain is Transcription antitermination protein NusB, found in Brucella suis (strain ATCC 23445 / NCTC 10510).